A 451-amino-acid chain; its full sequence is Probable D-serine dehydratase (451 aa).

The residue at position 119 (Lys-119) is an N6-(pyridoxal phosphate)lysine.

The protein belongs to the serine/threonine dehydratase family. DsdA subfamily. Pyridoxal 5'-phosphate is required as a cofactor.

The enzyme catalyses D-serine = pyruvate + NH4(+). This chain is Probable D-serine dehydratase, found in Acidovorax sp. (strain JS42).